We begin with the raw amino-acid sequence, 413 residues long: Arginine biosynthesis bifunctional protein ArgJ (413 aa).

Substrate contacts are provided by threonine 158, lysine 184, threonine 195, glutamate 285, asparagine 408, and serine 413. Threonine 195 acts as the Nucleophile in catalysis.

This sequence belongs to the ArgJ family. As to quaternary structure, heterotetramer of two alpha and two beta chains.

It localises to the cytoplasm. It carries out the reaction N(2)-acetyl-L-ornithine + L-glutamate = N-acetyl-L-glutamate + L-ornithine. It catalyses the reaction L-glutamate + acetyl-CoA = N-acetyl-L-glutamate + CoA + H(+). The protein operates within amino-acid biosynthesis; L-arginine biosynthesis; L-ornithine and N-acetyl-L-glutamate from L-glutamate and N(2)-acetyl-L-ornithine (cyclic): step 1/1. It functions in the pathway amino-acid biosynthesis; L-arginine biosynthesis; N(2)-acetyl-L-ornithine from L-glutamate: step 1/4. Its function is as follows. Catalyzes two activities which are involved in the cyclic version of arginine biosynthesis: the synthesis of N-acetylglutamate from glutamate and acetyl-CoA as the acetyl donor, and of ornithine by transacetylation between N(2)-acetylornithine and glutamate. The protein is Arginine biosynthesis bifunctional protein ArgJ of Mesorhizobium japonicum (strain LMG 29417 / CECT 9101 / MAFF 303099) (Mesorhizobium loti (strain MAFF 303099)).